Reading from the N-terminus, the 634-residue chain is Knob-associated histidine-rich protein (634 aa).

Positions 1-34 (MKSFKNKNTLRRKKAFPVFTKILLVSFLVWVLKC) are cleaved as a signal peptide. The N-linked (GlcNAc...) asparagine glycan is linked to asparagine 42. Residues 57-87 (AQKQHEHHHHHHHQHQHQHQAPHQAHHHHHH) are compositionally biased toward basic residues. 2 disordered regions span residues 57–143 (AQKQ…QVFR) and 347–634 (SSVN…GCCG). A compositionally biased stretch (low complexity) spans 95–104 (PQVHQQVHGQ). Residues 108 to 117 (HHHHHHHHHQ) are compositionally biased toward basic residues. 2 stretches are compositionally biased toward basic and acidic residues: residues 354 to 375 (KHGD…EGEK) and 396 to 405 (KDNEDAESVK). The segment covering 406–422 (SKKHKSHDCEKKKSKKH) has biased composition (basic residues). Composition is skewed to basic and acidic residues over residues 423–444 (KDNE…GEKH) and 453–493 (KTNE…KKVD). The span at 494 to 505 (STSADNKSTNAA) shows a compositional bias: polar residues. A compositionally biased stretch (basic and acidic residues) spans 509–520 (AKDKTQGGKTDK). 4 consecutive repeat copies span residues 540–549 (TKGATKEAST), 550–559 (SKEATKEAST), 560–569 (SKGATKEAST), and 570–579 (TEGATKGAST). The interval 540–580 (TKGATKEASTSKEATKEASTSKGATKEASTTEGATKGASTT) is 4 X 10 AA tandem repeats of [TS]-[KE]-[GE]-A-T-K-[EG]-A-S-T. The span at 567–591 (ASTTEGATKGASTTAGSTTGATTGA) shows a compositional bias: low complexity. Over residues 605–620 (AANNGEQVMSRGQAQL) the composition is skewed to polar residues. Positions 625 to 634 (KKKKKRGCCG) are enriched in basic residues.

The protein localises to the secreted. KAHRP might mimick human histidine-rich glycoproteins to anchor host thrombospondin or a parasite analog in a binding complex with the endothelial cell receptor. This chain is Knob-associated histidine-rich protein, found in Plasmodium falciparum (isolate FCR-3 / Gambia).